The chain runs to 78 residues: Neurogranin (78 aa).

N-acetylmethionine is present on Met1. The IQ domain maps to 26–49; the sequence is ANAAAAKIQASFRGHMARKKIKSG. Ser36 carries the post-translational modification Phosphoserine; by PHK and PKC. The tract at residues 38-78 is disordered; the sequence is RGHMARKKIKSGERGRKGPGPGGPGGAGGARGGAGGGPSGD. Residues 50-78 enclose the Collagen-like domain; the sequence is ERGRKGPGPGGPGGAGGARGGAGGGPSGD. Gly residues predominate over residues 55-78; sequence GPGPGGPGGAGGARGGAGGGPSGD. Citrulline; partial is present on Arg68. Arg68 is modified (omega-N-methylarginine).

The protein belongs to the neurogranin family. The N-terminus is blocked. Post-translationally, phosphorylated at Ser-36 by PHK and PKC. Phosphorylation prevents interaction with Calmodulin and interrupts several learning- and memory-associated functions. Is highly enriched in brain. Accumulates postsynaptically in dendritic spines of neostriatal neurons.

Functionally, acts as a 'third messenger' substrate of protein kinase C-mediated molecular cascades during synaptic development and remodeling. Binds to calmodulin in the absence of calcium. In Bos taurus (Bovine), this protein is Neurogranin (NRGN).